The primary structure comprises 281 residues: Mad-like protein 1 (281 aa).

A compositionally biased stretch (low complexity) spans 71–80 (SCASNASTSS). The segment at 71–105 (SCASNASTSSQPYCSSPPARKSSKHSRTAHNELEK) is disordered. The interval 95-108 (HSRTAHNELEKTRR) is basic motif. The bHLH domain occupies 95–147 (HSRTAHNELEKTRRANLRGCLETLKMLVPCVSDATRNTTLALLTRARDHIIEL). The tract at residues 109 to 147 (ANLRGCLETLKMLVPCVSDATRNTTLALLTRARDHIIEL) is helix-loop-helix motif. Residues 144-185 (IIELQDSNAAQMKKLNDLRDEQDELVAELAQLQADEEVAQAT) are a coiled coil. Residues 189–213 (CQTLSQSRPESRASSFTSTSSRDSP) form a disordered region. Residues 200–212 (RASSFTSTSSRDS) are compositionally biased toward low complexity.

As to quaternary structure, forms heterodimer with mxl-1 in the presence and absence of DNA. Post-translationally, ubiquitinated. Expressed in intestinal cells in adults. Expressed in D-type motor neuron cell bodies.

The protein localises to the nucleus. Functionally, transcriptional regulator which binds to the E box motif 5'-CACGTG-3', when in a heterodimeric complex with mxl-1. Involved in the control of lifespan in response to dietary restriction, the decline in protein homeostasis associated with normal aging, germline signaling and may overlap with the insulin-like signaling pathway. Plays a role in autophagy. Involved in promoting infection by the microsporidian pathogen N.parisii, possibly together with transcription factors pha-4 and zip-10. In response to neuronal injury, mdl-1 is targeted by sdz-33 for ubiquitin-mediated degradation, probably thereby reducing levels of mdl-1-mxl-1 heterodimers, allowing free mxl-1 to form complexes with tdpt-1 and thus inhibiting tdpt-1-dependent sumoylation of ets-4. In Caenorhabditis elegans, this protein is Mad-like protein 1.